A 158-amino-acid polypeptide reads, in one-letter code: NAD(P)H-quinone oxidoreductase subunit J, chloroplastic (158 aa).

This sequence belongs to the complex I 30 kDa subunit family. NDH is composed of at least 16 different subunits, 5 of which are encoded in the nucleus.

The protein localises to the plastid. The protein resides in the chloroplast thylakoid membrane. It catalyses the reaction a plastoquinone + NADH + (n+1) H(+)(in) = a plastoquinol + NAD(+) + n H(+)(out). The enzyme catalyses a plastoquinone + NADPH + (n+1) H(+)(in) = a plastoquinol + NADP(+) + n H(+)(out). In terms of biological role, NDH shuttles electrons from NAD(P)H:plastoquinone, via FMN and iron-sulfur (Fe-S) centers, to quinones in the photosynthetic chain and possibly in a chloroplast respiratory chain. The immediate electron acceptor for the enzyme in this species is believed to be plastoquinone. Couples the redox reaction to proton translocation, and thus conserves the redox energy in a proton gradient. This chain is NAD(P)H-quinone oxidoreductase subunit J, chloroplastic, found in Olimarabidopsis pumila (Dwarf rocket).